The following is a 97-amino-acid chain: MSHISADDVRKVAKLARLNLPDDKIATYTGQLESILGYVSQLEQVDTTGVPETTRAVEVTNVTRQDGVDPTPVREEILNQAPQREGDFFRVPKILAD.

It belongs to the GatC family. Heterotrimer of A, B and C subunits.

The enzyme catalyses L-glutamyl-tRNA(Gln) + L-glutamine + ATP + H2O = L-glutaminyl-tRNA(Gln) + L-glutamate + ADP + phosphate + H(+). It catalyses the reaction L-aspartyl-tRNA(Asn) + L-glutamine + ATP + H2O = L-asparaginyl-tRNA(Asn) + L-glutamate + ADP + phosphate + 2 H(+). In terms of biological role, allows the formation of correctly charged Asn-tRNA(Asn) or Gln-tRNA(Gln) through the transamidation of misacylated Asp-tRNA(Asn) or Glu-tRNA(Gln) in organisms which lack either or both of asparaginyl-tRNA or glutaminyl-tRNA synthetases. The reaction takes place in the presence of glutamine and ATP through an activated phospho-Asp-tRNA(Asn) or phospho-Glu-tRNA(Gln). This Synechococcus sp. (strain CC9902) protein is Aspartyl/glutamyl-tRNA(Asn/Gln) amidotransferase subunit C.